Reading from the N-terminus, the 153-residue chain is MARTGYSATIEGENVARAKANELPVSPKHSIEIARFIKNMTTTEAKAYLTDVVALKKAIPFKRFNRNVAHKRGLSKWPAGRYPVKAAEAYIRLLESVEKNAEYIGLDVENLRIDHAAANTGRGLRAFFPRAMGRATPKRRETVNIEIVVTEVA.

This sequence belongs to the universal ribosomal protein uL22 family. In terms of assembly, part of the 50S ribosomal subunit.

In terms of biological role, this protein binds specifically to 23S rRNA. It makes multiple contacts with different domains of the 23S rRNA in the assembled 50S subunit and ribosome. Its function is as follows. The globular domain of the protein is located near the polypeptide exit tunnel on the outside of the subunit, while an extended beta-hairpin is found that lines the wall of the exit tunnel in the center of the 70S ribosome. This chain is Large ribosomal subunit protein uL22, found in Methanoculleus marisnigri (strain ATCC 35101 / DSM 1498 / JR1).